Reading from the N-terminus, the 593-residue chain is Aspartate--tRNA(Asp/Asn) ligase (593 aa).

Glu173 is a binding site for L-aspartate. An aspartate region spans residues 197–200 (QLFK). Residue Arg219 participates in L-aspartate binding. ATP-binding positions include 219 to 221 (RDE) and Gln228. An L-aspartate-binding site is contributed by His451. Glu485 contributes to the ATP binding site. Residue Arg492 participates in L-aspartate binding. 537 to 540 (GIDR) serves as a coordination point for ATP.

Belongs to the class-II aminoacyl-tRNA synthetase family. Type 1 subfamily. In terms of assembly, homodimer.

Its subcellular location is the cytoplasm. It catalyses the reaction tRNA(Asx) + L-aspartate + ATP = L-aspartyl-tRNA(Asx) + AMP + diphosphate. Aspartyl-tRNA synthetase with relaxed tRNA specificity since it is able to aspartylate not only its cognate tRNA(Asp) but also tRNA(Asn). Reaction proceeds in two steps: L-aspartate is first activated by ATP to form Asp-AMP and then transferred to the acceptor end of tRNA(Asp/Asn). The polypeptide is Aspartate--tRNA(Asp/Asn) ligase (Legionella pneumophila (strain Paris)).